A 137-amino-acid polypeptide reads, in one-letter code: Phospholipase A2 group V (137 aa).

A signal peptide spans 1–20 (MKGLLTLAWFLACSVPAVPG). Intrachain disulfides connect Cys-46–Cys-137, Cys-48–Cys-64, Cys-63–Cys-117, Cys-70–Cys-110, Cys-79–Cys-103, and Cys-97–Cys-108. Ca(2+)-binding residues include Tyr-47, Gly-49, and Gly-51. The active site involves His-67. Asp-68 serves as a coordination point for Ca(2+). Residue Asp-111 is part of the active site.

Belongs to the phospholipase A2 family. Requires Ca(2+) as cofactor. This enzyme lacks one of the seven disulfide bonds found in similar PA2 proteins. In terms of tissue distribution, expressed in peritoneal macrophages (at protein level). Expressed in heart, skeletal muscle and white adipose tissue.

Its subcellular location is the secreted. It is found in the cell membrane. The protein resides in the cytoplasmic vesicle. The protein localises to the phagosome. It localises to the recycling endosome. Its subcellular location is the golgi apparatus. It is found in the cis-Golgi network. The protein resides in the trans-Golgi network. It catalyses the reaction a 1,2-diacyl-sn-glycero-3-phosphocholine + H2O = a 1-acyl-sn-glycero-3-phosphocholine + a fatty acid + H(+). It carries out the reaction 1-hexadecanoyl-2-(9Z-octadecenoyl)-sn-glycero-3-phosphocholine + H2O = 1-hexadecanoyl-sn-glycero-3-phosphocholine + (9Z)-octadecenoate + H(+). The catalysed reaction is 1-hexadecanoyl-2-(5Z,8Z,11Z,14Z-eicosatetraenoyl)-sn-glycero-3-phosphocholine + H2O = 1-hexadecanoyl-sn-glycero-3-phosphocholine + (5Z,8Z,11Z,14Z)-eicosatetraenoate + H(+). The enzyme catalyses 1-hexadecanoyl-2-(9Z,12Z-octadecadienoyl)-sn-glycero-3-phosphoethanolamine + H2O = 1-hexadecanoyl-sn-glycero-3-phosphoethanolamine + (9Z,12Z)-octadecadienoate + H(+). It catalyses the reaction 1-hexadecanoyl-2-(5Z,8Z,11Z,14Z-eicosatetraenoyl)-sn-glycero-3-phosphoethanolamine + H2O = 1-hexadecanoyl-sn-glycero-3-phosphoethanolamine + (5Z,8Z,11Z,14Z)-eicosatetraenoate + H(+). It carries out the reaction 1-octadecanoyl-2-(5Z,8Z,11Z,14Z-eicosatetraenoyl)-sn-glycero-3-phospho-(1D-myo-inositol) + H2O = 1-octadecanoyl-sn-glycero-3-phospho-(1D-myo-inositol) + (5Z,8Z,11Z,14Z)-eicosatetraenoate + H(+). The catalysed reaction is 1-hexadecanoyl-2-(9Z-octadecenoyl)-sn-glycero-3-phosphoglycerol + H2O = 1-hexadecanoyl-sn-glycero-3-phosphoglycerol + (9Z)-octadecenoate + H(+). The enzyme catalyses N-hexadecanoyl-1,2-di-(9Z-octadecenoyl)-sn-glycero-3-phosphoethanolamine + H2O = N-hexadecanoyl-1-(9Z-octadecenoyl)-sn-glycero-3-phosphoethanolamine + (9Z)-octadecenoate + H(+). It catalyses the reaction 1'-[1,2-di-(9Z-octadecenoyl)-sn-glycero-3-phospho]-3'-[1-(9Z-octadecenoyl)-sn-glycero-3-phospho]-glycerol + H2O = 1',3'-bis-[1-(9Z-octadecenoyl)-sn-glycero-3-phospho]-glycerol + (9Z)-octadecenoate + H(+). It carries out the reaction 1',3'-bis[1,2-di-(9Z-octadecenoyl)-sn-glycero-3-phospho]-glycerol + H2O = 1'-[1,2-di-(9Z-octadecenoyl)-sn-glycero-3-phospho]-3'-[1-(9Z-octadecenoyl)-sn-glycero-3-phospho]-glycerol + (9Z)-octadecenoate + H(+). Its pathway is lipid metabolism; phospholipid metabolism. It functions in the pathway lipid metabolism; leukotriene B4 biosynthesis. It participates in lipid metabolism; leukotriene C4 biosynthesis. In terms of biological role, secretory calcium-dependent phospholipase A2 that primarily targets extracellular phospholipids. Hydrolyzes the ester bond of the fatty acyl group attached at sn-2 position of phospholipids (phospholipase A2 activity), preferentially releasing fatty acyl groups with a low degree of unsaturation such as oleoyl (C18:1) and linoleoyl (C18:2) groups. Hydrolyzes low-density lipoprotein (LDL) phospholipids releasing unsaturated fatty acids that drive macrophage polarization toward an M2 phenotype. May act in an autocrine and paracrine manner. Contributes to lipid remodeling of cellular membranes at different subcellular locations and generation of lipid mediators involved in pathogen clearance. Cleaves sn-2 fatty acyl chains of cardiolipin, a major component of the inner membrane of mitochondria and bacterial membranes. Promotes phagocytosis of bacteria in macrophages through production of lysophosphatidylethanolamines. Displays bactericidal activity against Gram-positive bacteria by directly hydrolyzing the phospholipids of the bacterial membrane. Promotes phagocytosis and killing of ingested fungi likely through controlling phagosome-lysosome fusion and phagosome maturation. Plays a role in biosynthesis of cysteinyl leukotrienes (CysLTs) in myeloid cells. In eosinophils, triggers perinuclear arachidonate release and LTC4 synthesis in a PLA2G4A-independent way. In neutrophils, amplifies CysLTs biosynthesis initiated by PLA2G4A. Promotes immune complex clearance in macrophages via stimulating synthesis of CysLTs, which act through CYSLTR1 to trigger phagocytosis. May regulate antigen processing in antigen-presenting cells. In pulmonary macrophages regulates IL33 production required for activation of group 2 innate lymphoid cells. May play a role in the biosynthesis of N-acyl ethanolamines that regulate energy metabolism. Hydrolyzes N-acyl phosphatidylethanolamines to N-acyl lysophosphatidylethanolamines, which are further cleaved by a lysophospholipase D to release N-acyl ethanolamines. In Mus musculus (Mouse), this protein is Phospholipase A2 group V (Pla2g5).